We begin with the raw amino-acid sequence, 330 residues long: Ig gamma-2A chain C region, A allele (330 aa).

Ig-like domains are found at residues 6–98, 121–220, and 229–325; these read PSVY…KKIE, PSVF…RTIS, and PQVY…KSFS. 3 disulfide bridges follow: Cys27–Cys82, Cys144–Cys204, and Cys250–Cys308. Asn180 carries an N-linked (GlcNAc...) asparagine glycan.

This Mus musculus (Mouse) protein is Ig gamma-2A chain C region, A allele (Ighg).